The following is a 358-amino-acid chain: Probable protein phosphatase 2C 68 (358 aa).

Residues 74–352 (RHGAASVAGR…DNISVVVVDL (279 aa)) enclose the PPM-type phosphatase domain. Residues aspartate 117, glycine 118, aspartate 298, and aspartate 343 each coordinate Mn(2+).

Belongs to the PP2C family. Requires Mg(2+) as cofactor. It depends on Mn(2+) as a cofactor.

The protein localises to the nucleus. It localises to the cytoplasm. Its subcellular location is the cytosol. The enzyme catalyses O-phospho-L-seryl-[protein] + H2O = L-seryl-[protein] + phosphate. It catalyses the reaction O-phospho-L-threonyl-[protein] + H2O = L-threonyl-[protein] + phosphate. In terms of biological role, involved in the regulation of abiotic stress responses. Acts as a negative regulator of abscisic acid (ABA) signaling and positive regulator of abiotic stress signaling. May be involved in panicle development. This chain is Probable protein phosphatase 2C 68, found in Oryza sativa subsp. japonica (Rice).